Here is an 842-residue protein sequence, read N- to C-terminus: ATP-binding cassette sub-family B member 6 (842 aa).

The Lumenal portion of the chain corresponds to 1–26 (MVTVGNYCEAEGPLGPAWAQNGLSPC). Residues 1 to 205 (MVTVGNYCEA…SGGLFILGLW (205 aa)) are required for the lysosomal targeting. The tract at residues 1–236 (MVTVGNYCEA…RNQAQSTDRT (236 aa)) is required for ATPase activity. Cysteine 8 and cysteine 26 are oxidised to a cystine. Residues 27–47 (FFFTLVPSTLMALGALALVLV) traverse the membrane as a helical segment. Residues 48–72 (LPCRRRDVPSGTEELFWAADSRVAP) lie on the Cytoplasmic side of the membrane. Residues 73–93 (YALQLFLATLQVALPLAGLAG) traverse the membrane as a helical segment. At 94–106 (RVGTARGVRLPGY) the chain is on the lumenal side. The chain crosses the membrane as a helical span at residues 107 to 127 (LLLASMLGSLASACGLWLLVA). The Cytoplasmic portion of the chain corresponds to 128-147 (ERRQARQSLAMGVWMKFRHS). Residues 148–168 (SGLLLLWTVAFAAENLALVSW) form a helical membrane-spanning segment. Residues 169–185 (NSPQWWWARADLGQQVQ) are Lumenal-facing. The helical transmembrane segment at 186-206 (FGLWVLRYVISGGLFILGLWA) threads the bilayer. Topologically, residues 207–263 (PGLRPQSYTLRVHEADQDVERNQAQSTDRTSTWRDLGRKLRLLSSYLWPRGSPALQF) are cytoplasmic. Residues 264–284 (IVLICLGLMGLDRALNVLVPI) traverse the membrane as a helical segment. In terms of domain architecture, ABC transmembrane type-1 spans 265–556 (VLICLGLMGL…FGTYYRMIQT (292 aa)). The Lumenal portion of the chain corresponds to 285–305 (FYRDIVNLLTSKAPWSSLAWT). The helical transmembrane segment at 306–326 (VTTYVFLKFLQGGGTGSTGFV) threads the bilayer. The Cytoplasmic portion of the chain corresponds to 327 to 375 (SNLRTFLWIRVQQFTSRGVELRLFSHLHELSLRWHLGRRTGEVLRVVDR). Residues 376–396 (GTSSVTGLLSYLVFNIIPTLA) form a helical membrane-spanning segment. Aspartate 397 is a topological domain (lumenal). A helical membrane pass occupies residues 398 to 418 (IIIGIIYFSMFFNAWFGLIVF). Residues 419–499 (LCMSLYLFLT…SSASLVVLNQ (81 aa)) lie on the Cytoplasmic side of the membrane. A helical transmembrane segment spans residues 500–520 (TQNLVIGLGLLAGSLLCAYFV). Over 521-529 (SEQKLQVGD) the chain is Lumenal. Residues 530 to 550 (FVLFGTYITQLYMPLNWFGTY) traverse the membrane as a helical segment. At 551 to 842 (YRMIQTNFID…SEDSKPQDIA (292 aa)) the chain is on the cytoplasmic side. The region spanning 590 to 824 (IEFENVHFSY…GGVYAEMWQL (235 aa)) is the ABC transporter domain. Residue 623–630 (GPSGAGKS) participates in ATP binding.

It belongs to the ABC transporter superfamily. ABCB family. Heavy Metal importer (TC 3.A.1.210) subfamily. Homodimer. In terms of processing, N-glycosylated. As to expression, highly expressed in the liver, adrenal glands, and testis.

The protein resides in the cell membrane. It localises to the mitochondrion outer membrane. The protein localises to the endoplasmic reticulum membrane. Its subcellular location is the golgi apparatus membrane. It is found in the endosome membrane. The protein resides in the lysosome membrane. It localises to the late endosome membrane. The protein localises to the early endosome membrane. Its subcellular location is the secreted. It is found in the extracellular exosome. The protein resides in the mitochondrion. It localises to the endosome. The protein localises to the multivesicular body membrane. Its subcellular location is the melanosome membrane. The catalysed reaction is heme b(in) + ATP + H2O = heme b(out) + ADP + phosphate + H(+). It catalyses the reaction coproporphyrin III(in) + ATP + H2O = coproporphyrin III(out) + ADP + phosphate + H(+). It carries out the reaction pheophorbide a(in) + ATP + H2O = pheophorbide a(out) + ADP + phosphate + H(+). The enzyme catalyses coproporphyrinogen III(in) + ATP + H2O = coproporphyrinogen III(out) + ADP + phosphate + H(+). The catalysed reaction is protoporphyrin IX(in) + ATP + H2O = protoporphyrin IX(out) + ADP + phosphate + H(+). It catalyses the reaction coproporphyrin I(in) + ATP + H2O = coproporphyrin I(out) + ADP + phosphate + H(+). It carries out the reaction uroporphyrin I(in) + ATP + H2O = uroporphyrin I(out) + ADP + phosphate + H(+). The enzyme catalyses uroporphyrin III(in) + ATP + H2O = uroporphyrin III(out) + ADP + phosphate + H(+). Functionally, ATP-dependent transporter that catalyzes the transport of a broad-spectrum of porphyrins from the cytoplasm to the extracellular space through the plasma membrane or into the vesicle lumen. May also function as an ATP-dependent importer of porphyrins from the cytoplasm into the mitochondria, in turn may participate in the de novo heme biosynthesis regulation and in the coordination of heme and iron homeostasis during phenylhydrazine stress. May also play a key role in the early steps of melanogenesis producing PMEL amyloid fibrils. In vitro, it confers to cells a resistance to toxic metal such as arsenic and cadmium and against chemotherapeutics agent such as 5-fluorouracil, SN-38 and vincristin. In addition may play a role in the transition metal homeostasis. This is ATP-binding cassette sub-family B member 6 from Mesocricetus auratus (Golden hamster).